A 289-amino-acid polypeptide reads, in one-letter code: Diaminopimelate epimerase (289 aa).

Substrate contacts are provided by N13, Q47, and N67. The Proton donor role is filled by C76. Substrate is bound by residues 77-78 (GN), N167, N200, and 218-219 (ER). C227 functions as the Proton acceptor in the catalytic mechanism. 228-229 (GT) contributes to the substrate binding site.

Belongs to the diaminopimelate epimerase family. Homodimer.

It localises to the cytoplasm. The catalysed reaction is (2S,6S)-2,6-diaminopimelate = meso-2,6-diaminopimelate. Its pathway is amino-acid biosynthesis; L-lysine biosynthesis via DAP pathway; DL-2,6-diaminopimelate from LL-2,6-diaminopimelate: step 1/1. Catalyzes the stereoinversion of LL-2,6-diaminopimelate (L,L-DAP) to meso-diaminopimelate (meso-DAP), a precursor of L-lysine and an essential component of the bacterial peptidoglycan. The polypeptide is Diaminopimelate epimerase (Burkholderia thailandensis (strain ATCC 700388 / DSM 13276 / CCUG 48851 / CIP 106301 / E264)).